The primary structure comprises 137 residues: ER-derived vesicles protein erv14 (137 aa).

The Cytoplasmic segment spans residues Met-1–Tyr-9. Residues Ile-10 to Phe-30 form a helical membrane-spanning segment. The Extracellular segment spans residues Ser-31 to Thr-62. The chain crosses the membrane as a helical span at residues Leu-63–Phe-83. At His-84 to Lys-114 the chain is on the cytoplasmic side. A helical membrane pass occupies residues Val-115 to Gln-135. Residues Glu-136–Glu-137 are Extracellular-facing.

Belongs to the cornichon family.

It is found in the endoplasmic reticulum. The protein resides in the membrane. Its subcellular location is the golgi apparatus membrane. Its function is as follows. Regulates export of the secretory proteins from the endoplasmic reticulum in COPII-coated vesicles. The chain is ER-derived vesicles protein erv14 (erv14) from Schizosaccharomyces pombe (strain 972 / ATCC 24843) (Fission yeast).